The primary structure comprises 322 residues: MNNPWELDHFREELVSVNIDAAQPQQLFLSVRGPPRTTPKQPVAIIECGAAATTRWWTVVQRLLCPTLRVYCYDRAGLGRSGHAVVFPRTASSMAFELERLFETVGVEPPFIFITHSYGAIITREFLARLPRPKQSVVGMLFVESNQEKTHQELIVSSHLSTSLSGLNSLVSTGLYEDHQYSEAEVEAILKYESGTTTNRSDKPSAAISELENMESSARALADREQLQKHILSPNPITVMRGDITRDLRRLFKTSGVMHQGAEEIESFLEHFARVDRQLQREILQLSHSARFVQAKKSGHHVEATEPELITAEVRRIVKLVR.

The AB hydrolase-1 domain occupies 36-319; that stretch reads RTTPKQPVAI…ITAEVRRIVK (284 aa).

Belongs to the AB hydrolase superfamily.

It functions in the pathway mycotoxin biosynthesis. In terms of biological role, AB hydrolase superfamily protein; part of the gene cluster that mediates the biosynthesis of gramillins A and B, bicyclic lipopeptides that induce cell death in maize leaves but not in wheat leaves. The nonribosomal peptide synthetase GRA1 incorporates respectively a glutamic adic (Glu), a leucine (Leu), a serine (Ser), a hydroxyglutamine (HOGln), a 2-amino decanoic acid, and 2 cysteins (CysB and CysA). The biosynthesis of 2-amino decanoic acid incorporated in gramillins could be initiated by a fatty acid synthase composed of the alpha and beta subunits FGSG_00036 and FGSG_11656. The cytochrome P450 monooxygenase FGSG_15680 could hydroxylate the fatty acid chain. Subsequent oxidation to the ketone by the oxidoreductase FGSG_00048 and transamination by aminotransferase FGSG_00049 could form 2-amino-decanoic acid. On the other hand, FGSG_15680 could also be responsible for the HO-modified glutamine at the gamma-position. Whether hydroxylation occurs on the fully assembled product or on the Gln residue prior to assembly into the gramillins requires further proof. The thioredoxin FGSG_00043 could also be required for the disulfide-bond formation between CysA and CysB. The specific involvement of the remaining proteins from the cluster is more difficult to discern, but could have broader regulatory (FGSG_00040 and FGSG_11657) or enzymatic functions (FGSG_00044 and FGSG_00045). The final C-domain of GRA1 does not possess the expected sequence of a termination CT domain, often implicated in macrocyclization and release of a cyclopeptidein fungal NRPs; and the thioesterase FGSG_00047 may act in concert with the terminal C-domain of GRA1 to catalyze the formation of the macrocyclic anhydride and release of the products. The polypeptide is AB hydrolase superfamily protein FGSG_00044 (Gibberella zeae (strain ATCC MYA-4620 / CBS 123657 / FGSC 9075 / NRRL 31084 / PH-1) (Wheat head blight fungus)).